Reading from the N-terminus, the 57-residue chain is U-Asilidin(1)-Mar2a (57 aa).

Positions 1–24 are cleaved as a signal peptide; sequence MAPLLKLNILLLIVLICFTFHANA. Cystine bridges form between cysteine 28–cysteine 44, cysteine 35–cysteine 48, and cysteine 43–cysteine 53.

Belongs to the asilidin-1 family. As to expression, expressed by the venom gland. Exclusively expressed in the venom thoracic glands (and not in body tissues).

Its subcellular location is the secreted. Functionally, may act as a neurotoxin. The chain is U-Asilidin(1)-Mar2a from Machimus arthriticus (Breck robberfly).